The following is a 238-amino-acid chain: Flagellar L-ring protein (238 aa).

The signal sequence occupies residues 1–16; the sequence is MNKAILAVAMVLLLAG. Cys17 is lipidated: N-palmitoyl cysteine. A lipid anchor (S-diacylglycerol cysteine) is attached at Cys17.

It belongs to the FlgH family. As to quaternary structure, the basal body constitutes a major portion of the flagellar organelle and consists of four rings (L,P,S, and M) mounted on a central rod.

It is found in the cell outer membrane. The protein localises to the bacterial flagellum basal body. Its function is as follows. Assembles around the rod to form the L-ring and probably protects the motor/basal body from shearing forces during rotation. The sequence is that of Flagellar L-ring protein from Brucella abortus (strain 2308).